The following is a 117-amino-acid chain: Large ribosomal subunit protein uL18 (117 aa).

This sequence belongs to the universal ribosomal protein uL18 family. Part of the 50S ribosomal subunit; part of the 5S rRNA/L5/L18/L25 subcomplex. Contacts the 5S and 23S rRNAs.

Functionally, this is one of the proteins that bind and probably mediate the attachment of the 5S RNA into the large ribosomal subunit, where it forms part of the central protuberance. The protein is Large ribosomal subunit protein uL18 of Pectobacterium carotovorum subsp. carotovorum (strain PC1).